A 218-amino-acid chain; its full sequence is Large ribosomal subunit protein uL3 (218 aa).

The interval 134–154 (GRASHGNSRSHNVPGSIGMAQ) is disordered. Position 154 is an N5-methylglutamine (Q154).

Belongs to the universal ribosomal protein uL3 family. Part of the 50S ribosomal subunit. Forms a cluster with proteins L14 and L19. Methylated by PrmB.

One of the primary rRNA binding proteins, it binds directly near the 3'-end of the 23S rRNA, where it nucleates assembly of the 50S subunit. This chain is Large ribosomal subunit protein uL3, found in Polynucleobacter necessarius subsp. necessarius (strain STIR1).